Here is a 155-residue protein sequence, read N- to C-terminus: Small ribosomal subunit protein uS7 (155 aa).

It belongs to the universal ribosomal protein uS7 family. In terms of assembly, part of the 30S ribosomal subunit. Contacts proteins S9 and S11.

Functionally, one of the primary rRNA binding proteins, it binds directly to 16S rRNA where it nucleates assembly of the head domain of the 30S subunit. Is located at the subunit interface close to the decoding center, probably blocks exit of the E-site tRNA. This Corynebacterium efficiens (strain DSM 44549 / YS-314 / AJ 12310 / JCM 11189 / NBRC 100395) protein is Small ribosomal subunit protein uS7.